The primary structure comprises 326 residues: 4-hydroxythreonine-4-phosphate dehydrogenase (326 aa).

2 residues coordinate substrate: His-132 and Thr-133. A divalent metal cation is bound by residues His-163, His-208, and His-263. Substrate is bound by residues Lys-271, Asn-280, and Arg-289.

Belongs to the PdxA family. As to quaternary structure, homodimer. Zn(2+) is required as a cofactor. Requires Mg(2+) as cofactor. It depends on Co(2+) as a cofactor.

The protein localises to the cytoplasm. It carries out the reaction 4-(phosphooxy)-L-threonine + NAD(+) = 3-amino-2-oxopropyl phosphate + CO2 + NADH. Its pathway is cofactor biosynthesis; pyridoxine 5'-phosphate biosynthesis; pyridoxine 5'-phosphate from D-erythrose 4-phosphate: step 4/5. Functionally, catalyzes the NAD(P)-dependent oxidation of 4-(phosphooxy)-L-threonine (HTP) into 2-amino-3-oxo-4-(phosphooxy)butyric acid which spontaneously decarboxylates to form 3-amino-2-oxopropyl phosphate (AHAP). The polypeptide is 4-hydroxythreonine-4-phosphate dehydrogenase (Roseobacter denitrificans (strain ATCC 33942 / OCh 114) (Erythrobacter sp. (strain OCh 114))).